The following is a 72-amino-acid chain: Alpha-elapitoxin-Dpp2a (72 aa).

Intrachain disulfides connect Cys-3-Cys-21, Cys-14-Cys-42, Cys-27-Cys-31, Cys-46-Cys-57, and Cys-58-Cys-63.

The protein belongs to the three-finger toxin family. Long-chain subfamily. Type II alpha-neurotoxin sub-subfamily. Expressed by the venom gland.

It is found in the secreted. In terms of biological role, binds with high affinity to muscular (alpha-1/CHRNA1) and neuronal (alpha-7/CHRNA7) nicotinic acetylcholine receptor (nAChR) and inhibits acetylcholine from binding to the receptor, thereby impairing neuromuscular and neuronal transmission. This chain is Alpha-elapitoxin-Dpp2a, found in Dendroaspis polylepis polylepis (Black mamba).